We begin with the raw amino-acid sequence, 119 residues long: MQFTKWFIALPLAVTALSGCSLLERLVYRIDINQGNYVDQQSVDQLKFGMSKDQVRFVLGSPMLVENGYPDTWYYIYHHTQGHNDPVQKNLIVKFNDGGKLVNVAGDFPAGDSFFEGVN.

Positions 1-19 (MQFTKWFIALPLAVTALSG) are cleaved as a signal peptide. Cys20 carries the N-palmitoyl cysteine lipid modification. Cys20 is lipidated: S-diacylglycerol cysteine.

Belongs to the BamE family. Part of the Bam complex.

Its subcellular location is the cell outer membrane. In terms of biological role, part of the outer membrane protein assembly complex, which is involved in assembly and insertion of beta-barrel proteins into the outer membrane. This Vibrio cholerae serotype O1 (strain ATCC 39541 / Classical Ogawa 395 / O395) protein is Outer membrane protein assembly factor BamE.